The following is a 386-amino-acid chain: Succinate--CoA ligase [ADP-forming] subunit beta (386 aa).

The region spanning 9-244 is the ATP-grasp domain; sequence KELFANYGVP…LDEEEPLEVE (236 aa). Residues K46, 53–55, E99, L102, and E107 each bind ATP; that span reads GRG. Positions 199 and 213 each coordinate Mg(2+). Residues N264 and 321-323 each bind substrate; that span reads GIL.

It belongs to the succinate/malate CoA ligase beta subunit family. Heterotetramer of two alpha and two beta subunits. The cofactor is Mg(2+).

It catalyses the reaction succinate + ATP + CoA = succinyl-CoA + ADP + phosphate. It carries out the reaction GTP + succinate + CoA = succinyl-CoA + GDP + phosphate. Its pathway is carbohydrate metabolism; tricarboxylic acid cycle; succinate from succinyl-CoA (ligase route): step 1/1. Functionally, succinyl-CoA synthetase functions in the citric acid cycle (TCA), coupling the hydrolysis of succinyl-CoA to the synthesis of either ATP or GTP and thus represents the only step of substrate-level phosphorylation in the TCA. The beta subunit provides nucleotide specificity of the enzyme and binds the substrate succinate, while the binding sites for coenzyme A and phosphate are found in the alpha subunit. This chain is Succinate--CoA ligase [ADP-forming] subunit beta, found in Desulfatibacillum aliphaticivorans.